A 190-amino-acid polypeptide reads, in one-letter code: uncharacterized protein (190 aa).

Positions 1–58 (MDKRILAETFRLIKQKGFSFTMNDLAAALGTSKRTLYAYYSSKDQLVEAVVEQFIAEM) constitute an HTH tetR-type domain. The H-T-H motif DNA-binding region spans 21 to 40 (TMNDLAAALGTSKRTLYAYY).

This is an uncharacterized protein from Bacillus subtilis (strain 168).